Consider the following 307-residue polypeptide: Taste receptor type 2 member 10 (307 aa).

The Extracellular portion of the chain corresponds to M1–E6. A helical transmembrane segment spans residues G7–I27. The Cytoplasmic portion of the chain corresponds to G28–T42. The helical transmembrane segment at I43–T63 threads the bilayer. Topologically, residues D64–T100 are extracellular. The N-linked (GlcNAc...) asparagine glycan is linked to N92. The chain crosses the membrane as a helical span at residues S101–L121. Topologically, residues K122–N126 are cytoplasmic. A helical transmembrane segment spans residues M127–I147. The Extracellular segment spans residues A148–N179. A glycan (N-linked (GlcNAc...) asparagine) is linked at N158. Residues L180–L200 form a helical membrane-spanning segment. The Cytoplasmic segment spans residues W201 to K227. A helical transmembrane segment spans residues V228–S248. Topologically, residues C249–L257 are extracellular. A helical transmembrane segment spans residues L258–I278. At L279–T307 the chain is on the cytoplasmic side.

Belongs to the G-protein coupled receptor T2R family.

The protein resides in the membrane. Functionally, receptor that may play a role in the perception of bitterness and is gustducin-linked. May play a role in sensing the chemical composition of the gastrointestinal content. The activity of this receptor may stimulate alpha gustducin, mediate PLC-beta-2 activation and lead to the gating of TRPM5. The polypeptide is Taste receptor type 2 member 10 (TAS2R10) (Gorilla gorilla gorilla (Western lowland gorilla)).